The primary structure comprises 392 residues: Acetyl-CoA acetyltransferase (392 aa).

C89 acts as the Acyl-thioester intermediate in catalysis. Catalysis depends on proton acceptor residues H348 and C378.

This sequence belongs to the thiolase-like superfamily. Thiolase family. In terms of assembly, homotetramer.

It is found in the cytoplasm. It catalyses the reaction 2 acetyl-CoA = acetoacetyl-CoA + CoA. The protein operates within biopolymer metabolism; poly-(R)-3-hydroxybutanoate biosynthesis. Its pathway is metabolic intermediate biosynthesis; (R)-mevalonate biosynthesis; (R)-mevalonate from acetyl-CoA: step 1/3. This Shinella zoogloeoides (Crabtreella saccharophila) protein is Acetyl-CoA acetyltransferase.